The sequence spans 336 residues: Heme A synthase (336 aa).

Helical transmembrane passes span leucine 12–leucine 32, leucine 97–phenylalanine 117, isoleucine 130–isoleucine 150, serine 161–isoleucine 181, leucine 194–serine 214, phenylalanine 256–tyrosine 276, tyrosine 285–isoleucine 305, and isoleucine 310–isoleucine 330. Residue histidine 258 participates in heme binding. Histidine 316 contributes to the heme binding site.

Belongs to the COX15/CtaA family. Type 2 subfamily. Interacts with CtaB. It depends on heme b as a cofactor.

Its subcellular location is the cell membrane. The enzyme catalyses Fe(II)-heme o + 2 A + H2O = Fe(II)-heme a + 2 AH2. It functions in the pathway porphyrin-containing compound metabolism; heme A biosynthesis; heme A from heme O: step 1/1. Functionally, catalyzes the conversion of heme O to heme A by two successive hydroxylations of the methyl group at C8. The first hydroxylation forms heme I, the second hydroxylation results in an unstable dihydroxymethyl group, which spontaneously dehydrates, resulting in the formyl group of heme A. The protein is Heme A synthase of Pelagibacter ubique (strain HTCC1062).